A 217-amino-acid polypeptide reads, in one-letter code: Glyoxalase ElbB (217 aa).

The active-site Nucleophile is the Cys-135.

The protein belongs to the peptidase C56 family. Homodimer.

The enzyme catalyses glyoxal + H2O = glycolate + H(+). Displays glyoxalase activity, catalyzing the conversion of glyoxal to glycolate. However, this apparent glyoxalase activity may reflect a protein deglycase activity, which could be the primary function of this protein like other DJ-1 superfamily members such as PARK7, YajL, YhbO and HchA. Is not able to use methylglyoxal as substrate. In Escherichia coli (strain K12), this protein is Glyoxalase ElbB.